The primary structure comprises 107 residues: Nucleoid-associated protein A1G_07310 (107 aa).

This sequence belongs to the YbaB/EbfC family. In terms of assembly, homodimer.

Its subcellular location is the cytoplasm. The protein localises to the nucleoid. Binds to DNA and alters its conformation. May be involved in regulation of gene expression, nucleoid organization and DNA protection. This is Nucleoid-associated protein A1G_07310 from Rickettsia rickettsii (strain Sheila Smith).